The primary structure comprises 284 residues: NAD kinase (284 aa).

Catalysis depends on aspartate 70, which acts as the Proton acceptor. NAD(+) contacts are provided by residues 70 to 71, 139 to 140, lysine 167, aspartate 169, leucine 177, 180 to 185, and glutamine 236; these read DG, NE, and TAYNLS.

Belongs to the NAD kinase family. A divalent metal cation is required as a cofactor.

It localises to the cytoplasm. The enzyme catalyses NAD(+) + ATP = ADP + NADP(+) + H(+). Its function is as follows. Involved in the regulation of the intracellular balance of NAD and NADP, and is a key enzyme in the biosynthesis of NADP. Catalyzes specifically the phosphorylation on 2'-hydroxyl of the adenosine moiety of NAD to yield NADP. This is NAD kinase from Helicobacter pylori (strain Shi470).